We begin with the raw amino-acid sequence, 419 residues long: UDP-N-acetylglucosamine 1-carboxyvinyltransferase (419 aa).

22-23 contacts phosphoenolpyruvate; that stretch reads KN. Arg91 is a binding site for UDP-N-acetyl-alpha-D-glucosamine. Residue Cys115 is the Proton donor of the active site. Cys115 carries the post-translational modification 2-(S-cysteinyl)pyruvic acid O-phosphothioketal. Residues 120–124, 160–163, Asp305, and Ile327 each bind UDP-N-acetyl-alpha-D-glucosamine; these read RPVDL and KVSV.

It belongs to the EPSP synthase family. MurA subfamily.

Its subcellular location is the cytoplasm. The enzyme catalyses phosphoenolpyruvate + UDP-N-acetyl-alpha-D-glucosamine = UDP-N-acetyl-3-O-(1-carboxyvinyl)-alpha-D-glucosamine + phosphate. It participates in cell wall biogenesis; peptidoglycan biosynthesis. Its function is as follows. Cell wall formation. Adds enolpyruvyl to UDP-N-acetylglucosamine. The polypeptide is UDP-N-acetylglucosamine 1-carboxyvinyltransferase (Sodalis glossinidius (strain morsitans)).